Consider the following 906-residue polypeptide: Glutamate receptor 1 (906 aa).

Residues 1-18 (MQHIFAFFCTGFLGAVVG) form the signal peptide. The Extracellular portion of the chain corresponds to 19-536 (ANFPNNIQIG…GVFSFLDPLA (518 aa)). Residues N63, N249, N257, N363, N401, and N406 are each glycosylated (N-linked (GlcNAc...) asparagine). C75 and C323 are oxidised to a cystine. L-glutamate is bound by residues P492, T494, and R499. The helical transmembrane segment at 537–557 (YEIWMCIVFAYIGVSVVLFLV) threads the bilayer. The Cytoplasmic portion of the chain corresponds to 558–584 (SRFSPYEWHSEEFEEGRDQTTSDQSNE). Residues 585-600 (FGIFNSLWFSLGAFMQ) constitute an intramembrane region (helical; Pore-forming). The stretch at 601–603 (QGC) is an intramembrane region. A lipid anchor (S-palmitoyl cysteine) is attached at C603. At 604 to 609 (DISPRS) the chain is on the cytoplasmic side. Residues 610–630 (LSGRIVGGVWWFFTLIIISSY) traverse the membrane as a helical segment. At 631 to 805 (TANLAAFLTV…DKTSALSLSN (175 aa)) the chain is on the extracellular side. The residue at position 645 (S645) is a Phosphoserine. L-glutamate is bound by residues S668 and T669. S710 is subject to Phosphoserine. E719 contacts L-glutamate. A disulfide bridge connects residues C732 and C787. A helical transmembrane segment spans residues 806 to 826 (VAGVFYILIGGLGLAMLVALI). Topologically, residues 827–906 (EFCYKSRSES…SGMPLGATGL (80 aa)) are cytoplasmic. The S-palmitoyl cysteine moiety is linked to residue C829. Phosphoserine occurs at positions 849 and 863. A disordered region spans residues 861-880 (RNSGAGASSAGSGENGRVVS). Positions 863 to 872 (SGAGASSAGS) are enriched in low complexity. The short motif at 903-906 (ATGL) is the PDZ-binding element.

The protein belongs to the glutamate-gated ion channel (TC 1.A.10.1) family. GRIA1 subfamily. Homotetramer or heterotetramer of pore-forming glutamate receptor subunits; heteromeric assembly can be the result of both receptor subtype and flip-flop forms and according the composition, one partner can be dominant with respect to the fast desensitizing current component, whereas the other can determine the steady-state component. Tetramers may be formed by the dimerization of dimers. Found in a complex with GRIA2, GRIA3, GRIA4, CNIH2, CNIH3, CACNG2, CACNG3, CACNG4, CACNG5, CACNG7 and CACNG8. Interacts with HIP1 and RASGRF2. Interacts with SYNDIG1 and GRIA2. Interacts with DLG1 (via C-terminus). Interacts with LRFN1. Interacts with PRKG2. Interacts with CNIH2 and CACNG2. Interacts with CACNG5; this interaction modulates the gating. Interacts (via C-terminus) with PDLIM4 (via LIM domain); this interaction as well as the interaction of PDLIM4 with alpha-actinin is required for their colocalization in early endosomes. Interacts with SNX27 (via PDZ domain); the interaction is required for recycling to the plasma membrane when endocytosed and prevent degradation in lysosomes. Interacts (via PDZ-binding motif) with SHANK3 (via PDZ domain). Interacts with CACNG3; associates GRIA1 with the adapter protein complex 4 (AP-4) to target GRIA1 to the somatodendritic compartment of neurons. Interacts with CACNG2; this interaction mediates traffick to the plasma membrane and modulation of desensitization. Interaction with CNIH2 and CNIH3; this interaction promotes expression at the plasma membrane and extensively modulates their gating properties by slowing deactivation and desensitization kinetics. Found in a complex with GRIA2, GRIA3, GRIA4, DLG4, CACNG8 and CNIH2. In terms of processing, phosphorylated at Ser-645. Phosphorylated at Ser-710 by PKC. Phosphorylated at Ser-849 by PKC, PKA and CAMK2. Phosphorylated at Ser-863 by PKC, PKA and PRKG2. Phosphorylation of Ser-863 is reduced by induction of long-term depression and increased by induction of long-term potentiation. Palmitoylated. Depalmitoylated by CPT1C and upon L-glutamate stimulation. ZDHHC3/GODZ specifically palmitoylates Cys-603, which leads to Golgi retention and decreased cell surface expression. In contrast, Cys-829 palmitoylation does not affect cell surface expression but regulates stimulation-dependent endocytosis.

It is found in the cell membrane. Its subcellular location is the endoplasmic reticulum membrane. The protein localises to the postsynaptic cell membrane. The protein resides in the postsynaptic density membrane. It localises to the cell projection. It is found in the dendrite. Its subcellular location is the dendritic spine. The protein localises to the early endosome membrane. The protein resides in the recycling endosome membrane. It localises to the presynapse. It is found in the synapse. It carries out the reaction Ca(2+)(in) = Ca(2+)(out). It catalyses the reaction Na(+)(in) = Na(+)(out). The enzyme catalyses Mg(2+)(in) = Mg(2+)(out). The catalysed reaction is Li(+)(in) = Li(+)(out). It carries out the reaction K(+)(in) = K(+)(out). It catalyses the reaction Sr(2+)(in) = Sr(2+)(out). Functionally, ionotropic glutamate receptor that functions as a ligand-gated cation channel, gated by L-glutamate and glutamatergic agonists such as alpha-amino-3-hydroxy-5-methyl-4-isoxazolepropionic acid (AMPA), quisqualic acid, and kainic acid. L-glutamate acts as an excitatory neurotransmitter at many synapses in the central nervous system. Binding of the excitatory neurotransmitter L-glutamate induces a conformation change, leading to the opening of the cation channel, and thereby converts the chemical signal to an electrical impulse upon entry of monovalent and divalent cations such as sodium and calcium. The receptor then desensitizes rapidly and enters in a transient inactive state, characterized by the presence of bound agonist. In the presence of CACNG2 or CACNG4 or CACNG7 or CACNG8, shows resensitization which is characterized by a delayed accumulation of current flux upon continued application of L-glutamate. Calcium (Ca(2+)) permeability depends on subunits composition and, heteromeric channels containing edited GRIA2 subunit are calcium-impermeable. Also permeable to other divalents cations such as strontium(2+) and magnesium(2+) and monovalent cations such as potassium(1+) and lithium(1+). The sequence is that of Glutamate receptor 1 from Macaca fascicularis (Crab-eating macaque).